The primary structure comprises 125 residues: Large ribosomal subunit protein bL12 (125 aa).

The protein belongs to the bacterial ribosomal protein bL12 family. As to quaternary structure, homodimer. Part of the ribosomal stalk of the 50S ribosomal subunit. Forms a multimeric L10(L12)X complex, where L10 forms an elongated spine to which 2 to 4 L12 dimers bind in a sequential fashion. Binds GTP-bound translation factors.

In terms of biological role, forms part of the ribosomal stalk which helps the ribosome interact with GTP-bound translation factors. Is thus essential for accurate translation. This is Large ribosomal subunit protein bL12 from Sphingopyxis alaskensis (strain DSM 13593 / LMG 18877 / RB2256) (Sphingomonas alaskensis).